The chain runs to 233 residues: Large ribosomal subunit protein uL1 (233 aa).

It belongs to the universal ribosomal protein uL1 family. As to quaternary structure, part of the 50S ribosomal subunit.

Its function is as follows. Binds directly to 23S rRNA. The L1 stalk is quite mobile in the ribosome, and is involved in E site tRNA release. Functionally, protein L1 is also a translational repressor protein, it controls the translation of the L11 operon by binding to its mRNA. The protein is Large ribosomal subunit protein uL1 of Vibrio campbellii (strain ATCC BAA-1116).